The primary structure comprises 146 residues: Leptin (146 aa).

Residues Cys96 and Cys146 are joined by a disulfide bond.

The protein belongs to the leptin family.

It localises to the secreted. In terms of biological role, key player in the regulation of energy balance and body weight control. Once released into the circulation, has central and peripheral effects by binding LEPR, found in many tissues, which results in the activation of several major signaling pathways. In the hypothalamus, acts as an appetite-regulating factor that induces a decrease in food intake and an increase in energy consumption by inducing anorexinogenic factors and suppressing orexigenic neuropeptides, also regulates bone mass and secretion of hypothalamo-pituitary-adrenal hormones. In the periphery, increases basal metabolism, influences reproductive function, regulates pancreatic beta-cell function and insulin secretion, is pro-angiogenic for endothelial cell and affects innate and adaptive immunity. In the arcuate nucleus of the hypothalamus, activates by depolarization POMC neurons inducing FOS and SOCS3 expression to release anorexigenic peptides and inhibits by hyperpolarization NPY neurons inducing SOCS3 with a consequent reduction on release of orexigenic peptides. In addition to its known satiety inducing effect, has a modulatory role in nutrient absorption. In the intestine, reduces glucose absorption by enterocytes by activating PKC and leading to a sequential activation of p38, PI3K and ERK signaling pathways which exerts an inhibitory effect on glucose absorption. Acts as a growth factor on certain tissues, through the activation of different signaling pathways increases expression of genes involved in cell cycle regulation such as CCND1, via JAK2-STAT3 pathway, or VEGFA, via MAPK1/3 and PI3K-AKT1 pathways. May also play an apoptotic role via JAK2-STAT3 pathway and up-regulation of BIRC5 expression. Pro-angiogenic, has mitogenic activity on vascular endothelial cells and plays a role in matrix remodeling by regulating the expression of matrix metalloproteinases (MMPs) and tissue inhibitors of metalloproteinases (TIMPs). In innate immunity, modulates the activity and function of neutrophils by increasing chemotaxis and the secretion of oxygen radicals. Increases phagocytosis by macrophages and enhances secretion of pro-inflammatory mediators. Increases cytotoxic ability of NK cells. Plays a pro-inflammatory role, in synergy with IL1B, by inducing NOS2 which promotes the production of IL6, IL8 and Prostaglandin E2, through a signaling pathway that involves JAK2, PI3K, MAP2K1/MEK1 and MAPK14/p38. In adaptive immunity, promotes the switch of memory T-cells towards T helper-1 cell immune responses. Increases CD4(+)CD25(-) T-cell proliferation and reduces autophagy during TCR (T-cell receptor) stimulation, through MTOR signaling pathway activation and BCL2 up-regulation. The chain is Leptin (LEP) from Gorilla gorilla gorilla (Western lowland gorilla).